We begin with the raw amino-acid sequence, 133 residues long: Cytidine deaminase (133 aa).

The region spanning 3-131 (VDLDWVHHKL…EILKGGFRSY (129 aa)) is the CMP/dCMP-type deaminase domain. 43 to 45 (NIE) provides a ligand contact to substrate. Residue Cys54 participates in Zn(2+) binding. Catalysis depends on Glu56, which acts as the Proton donor. Residues Cys89 and Cys92 each coordinate Zn(2+).

It belongs to the cytidine and deoxycytidylate deaminase family. As to quaternary structure, homodimer. Requires Zn(2+) as cofactor.

The catalysed reaction is cytidine + H2O + H(+) = uridine + NH4(+). It carries out the reaction 2'-deoxycytidine + H2O + H(+) = 2'-deoxyuridine + NH4(+). Functionally, this enzyme scavenges exogenous and endogenous cytidine and 2'-deoxycytidine for UMP synthesis. The protein is Cytidine deaminase (cdd) of Mycoplasma pneumoniae (strain ATCC 29342 / M129 / Subtype 1) (Mycoplasmoides pneumoniae).